Consider the following 24-residue polypeptide: Waglerin-4 (24 aa).

Cys11 and Cys15 are joined by a disulfide.

This sequence belongs to the waglerin family. As to quaternary structure, monomer. Expressed by the venom gland.

It is found in the secreted. Functionally, waglerin-2 selectively blocks the epsilon subunit of muscle nicotinic acetylcholine receptor (nAChR). Also has effects on rodent ionotropic GABA(A) receptors (GABR), since it potentiates I(GABA) in some neurons and depresses I(GABA) in others. In mice, it elicits tachypnea, ocular proptosis, rapid collapse and spasms, whereas no toxic effects on respiration and blood pressure are observed in rats. In terms of biological role, waglerin-4 selectively blocks the epsilon subunit of muscle nicotinic acetylcholine receptor. It elicits tachypnea, ocular proptosis, rapid collapse and spasms in mice. It causes death by respiratory failure. In Tropidolaemus wagleri (Wagler's pit viper), this protein is Waglerin-4.